The primary structure comprises 327 residues: tRNA-modifying protein YgfZ (327 aa).

Residues Trp-27 and Trp-189 each coordinate folate.

It belongs to the tRNA-modifying YgfZ family.

The protein localises to the cytoplasm. In terms of biological role, folate-binding protein involved in regulating the level of ATP-DnaA and in the modification of some tRNAs. It is probably a key factor in regulatory networks that act via tRNA modification, such as initiation of chromosomal replication. The polypeptide is tRNA-modifying protein YgfZ (Klebsiella pneumoniae (strain 342)).